The sequence spans 210 residues: Probable membrane protein MT1774 (210 aa).

2 consecutive transmembrane segments (helical) span residues 43–63 (AVVMLLAVTVSLLTIPFAAAA) and 165–185 (ALAALGLWLSVAAVAGALLAL).

It localises to the cell membrane. The sequence is that of Probable membrane protein MT1774 from Mycobacterium tuberculosis (strain CDC 1551 / Oshkosh).